A 287-amino-acid chain; its full sequence is Phosphoribosylaminoimidazole-succinocarboxamide synthase (287 aa).

This sequence belongs to the SAICAR synthetase family.

It catalyses the reaction 5-amino-1-(5-phospho-D-ribosyl)imidazole-4-carboxylate + L-aspartate + ATP = (2S)-2-[5-amino-1-(5-phospho-beta-D-ribosyl)imidazole-4-carboxamido]succinate + ADP + phosphate + 2 H(+). The protein operates within purine metabolism; IMP biosynthesis via de novo pathway; 5-amino-1-(5-phospho-D-ribosyl)imidazole-4-carboxamide from 5-amino-1-(5-phospho-D-ribosyl)imidazole-4-carboxylate: step 1/2. In Neisseria meningitidis serogroup B (strain ATCC BAA-335 / MC58), this protein is Phosphoribosylaminoimidazole-succinocarboxamide synthase.